Reading from the N-terminus, the 586-residue chain is SPbeta prophage-derived uncharacterized protein YorA (586 aa).

PbH1 repeat units lie at residues 108 to 147, 148 to 170, 184 to 206, 207 to 235, 246 to 268, 288 to 313, 320 to 341, 364 to 384, 387 to 410, 411 to 432, 435 to 456, 481 to 504, and 505 to 531; these read AENV…HVHG, SKNV…WIAA, SKSV…ATNG, CEGL…DLEG, PYEL…TAHT, STDV…DSVG, GNRI…MIRG, AEDV…QIQV, SSDI…KVMD, SNDV…YCER, AVRI…YWDK, MYNI…HLIG, and GSEH…YLNG.

The chain is SPbeta prophage-derived uncharacterized protein YorA (yorA) from Bacillus subtilis (strain 168).